The following is a 93-amino-acid chain: YcgL domain-containing protein Swoo_2115 (93 aa).

The YcgL domain occupies 1-85 (MICAVYKSRR…PVVNLLEEHK (85 aa)).

The polypeptide is YcgL domain-containing protein Swoo_2115 (Shewanella woodyi (strain ATCC 51908 / MS32)).